Consider the following 473-residue polypeptide: Keratin, type I cuticular Ha6 (473 aa).

Positions 1–93 are head; that stretch reads MATQICTPTF…FCEGAFNGNE (93 aa). One can recognise an IF rod domain in the interval 93 to 404; it reads EKATMQILND…RLLDGEDCKL (312 aa). The tract at residues 94–128 is coil 1A; it reads KATMQILNDRLANYLEKVRQLEQENTQLECRIREW. Residues 129-139 are linker 1; the sequence is YECQIPYICPD. The coil 1B stretch occupies residues 140–240; sequence YQSYFKTAEE…HEEEVNALRS (101 aa). A linker 12 region spans residues 241 to 256; sequence QLGDRLNVEVDAAPPV. The interval 257–400 is coil 2; it reads DLNKILDDMR…ATYRRLLDGE (144 aa). The tail stretch occupies residues 401–473; that stretch reads DCKLPAHPCS…SREHVVPRAM (73 aa).

Belongs to the intermediate filament family. Heterotetramer of two type I and two type II keratins. In skin, only expressed in the suprabasal cells of tail scale epidermis. Suprabasally expressed in stratified squamous epithelia and also in the posterior unit of the complex filiform papillae of tongue. Expressed in rare anatomical sites in which an orthokeratinized stratum corneum would be too soft and a hard keratinized structure would be too rigid to meet the functional requirement of the respective epithelia.

The protein is Keratin, type I cuticular Ha6 of Mus musculus (Mouse).